A 373-amino-acid polypeptide reads, in one-letter code: Secondary metabolism regulator laeA (373 aa).

The interval 55–81 (ERDPAAGRWHANGSPSINSTSSKNPDR) is disordered. The segment covering 67–77 (GSPSINSTSSK) has biased composition (polar residues).

This sequence belongs to the methyltransferase superfamily. LaeA methyltransferase family. Component of the heterotrimeric velvet complex composed of laeA, veA and velB; VeA acting as a bridging protein between laeA and velB.

It is found in the nucleus. The catalysed reaction is L-methionyl-[protein] + S-adenosyl-L-methionine = S-methyl-L-methionyl-[protein] + S-adenosyl-L-homocysteine. Methyltransferase that performs automethylation. No other methyl-accepting substrate has been identified yet. Component of the velvet transcription factor complex that acts as a global regulator for secondary metabolite gene expression. Positively controls expression of 20% to 40% of major classes of secondary metabolite biosynthesis genes such as nonribosomal peptide synthetases, polyketide synthases, and P450 monooxygenases. Controls the expression of the gliotoxin gene cluster. Controls the expression of the fumitremorgin, fumagillin, and pseurotin gene clusters, where genes for fumagillin and pseurotin are physically intertwined in a single supercluster. Regulates the biosynthetic genes required for endocrocin production. Secondary metabolites under the transcriptional regulation of laeA are necessary for inhibition of angiogenesis during invasive infection in mice. Controls the expression of cell surface rodA, a hydrophobin that acts as an antiphagocytic molecule. Also regulates the expression of genes involved in conidial biosynthesis. This chain is Secondary metabolism regulator laeA, found in Aspergillus fumigatus (strain ATCC MYA-4609 / CBS 101355 / FGSC A1100 / Af293) (Neosartorya fumigata).